The primary structure comprises 273 residues: MSQSTVDVPPKGGFSFDLCKRNDMLTQKGLKAPSFLKTGTTIVGLIFKDGVILGADTRATEGPIVADKNCEKIHYMAPNIYCCGAGTAADTEAVTDMVSSQLRLHRYQTGRDSRVITALTLLKKHLFSYQGHVSAALVLGGVDITGPHLHTIYPHGSTDTLPFATMGSGSLAAMSVFEAKYKEGLTRDEGIKLVAESICSGIFNDLGSGSNVDICVITKGNKEYLRNYMEPNPRTYVSSKGYSFTKKTEVLLTKITPLLERVEITEVGEAMEE.

Residues 1-37 (MSQSTVDVPPKGGFSFDLCKRNDMLTQKGLKAPSFLK) constitute a propeptide, removed in mature form. The Nucleophile role is filled by Thr-40.

Belongs to the peptidase T1B family. As to quaternary structure, component of the 20S core complex of the 26S proteasome. The 26S proteasome is composed of a core protease (CP), known as the 20S proteasome, capped at one or both ends by the 19S regulatory particle (RP/PA700). The 20S proteasome core is composed of 28 subunits that are arranged in four stacked rings, resulting in a barrel-shaped structure. The two end rings are each formed by seven alpha subunits, and the two central rings are each formed by seven beta subunits. The catalytic chamber with the active sites is on the inside of the barrel.

It is found in the cytoplasm. It localises to the nucleus. The catalysed reaction is Cleavage of peptide bonds with very broad specificity.. Its function is as follows. The proteasome is a multicatalytic proteinase complex which is characterized by its ability to cleave peptides with Arg, Phe, Tyr, Leu, and Glu adjacent to the leaving group at neutral or slightly basic pH. The proteasome has an ATP-dependent proteolytic activity. This chain is Proteasome subunit beta type-7-A (PBB1), found in Arabidopsis thaliana (Mouse-ear cress).